Reading from the N-terminus, the 108-residue chain is Iron-sulfur cluster assembly protein CyaY (108 aa).

It belongs to the frataxin family.

Its function is as follows. Involved in iron-sulfur (Fe-S) cluster assembly. May act as a regulator of Fe-S biogenesis. The protein is Iron-sulfur cluster assembly protein CyaY of Burkholderia mallei (strain NCTC 10247).